The chain runs to 133 residues: UPF0134 protein MPN_151 (133 aa).

The protein belongs to the UPF0134 family.

The polypeptide is UPF0134 protein MPN_151 (Mycoplasma pneumoniae (strain ATCC 29342 / M129 / Subtype 1) (Mycoplasmoides pneumoniae)).